Here is a 357-residue protein sequence, read N- to C-terminus: Geranylgeranyl pyrophosphate synthase 11, chloroplastic (357 aa).

The transit peptide at 1–37 (MATTLSSSSLFIQFRGRRYNSLSSFNNLQKRTVLSLS) directs the protein to the chloroplast. Positions 103, 106, and 135 each coordinate isopentenyl diphosphate. Mg(2+) contacts are provided by Asp-142 and Asp-148. Arg-153 is a binding site for dimethylallyl diphosphate. Arg-154 lines the isopentenyl diphosphate pocket. Dimethylallyl diphosphate-binding residues include Lys-242, Thr-243, Gln-280, Lys-297, and Lys-307.

This sequence belongs to the FPP/GGPP synthase family. In terms of assembly, monomer. Requires Mg(2+) as cofactor.

Its subcellular location is the plastid. The protein resides in the chloroplast. The enzyme catalyses isopentenyl diphosphate + dimethylallyl diphosphate = (2E)-geranyl diphosphate + diphosphate. It carries out the reaction isopentenyl diphosphate + (2E)-geranyl diphosphate = (2E,6E)-farnesyl diphosphate + diphosphate. It catalyses the reaction isopentenyl diphosphate + (2E,6E)-farnesyl diphosphate = (2E,6E,10E)-geranylgeranyl diphosphate + diphosphate. The protein operates within isoprenoid biosynthesis; farnesyl diphosphate biosynthesis; farnesyl diphosphate from geranyl diphosphate and isopentenyl diphosphate: step 1/1. It functions in the pathway isoprenoid biosynthesis; geranyl diphosphate biosynthesis; geranyl diphosphate from dimethylallyl diphosphate and isopentenyl diphosphate: step 1/1. Its pathway is isoprenoid biosynthesis; geranylgeranyl diphosphate biosynthesis; geranylgeranyl diphosphate from farnesyl diphosphate and isopentenyl diphosphate: step 1/1. In terms of biological role, catalyzes the trans-addition of the three molecules of IPP onto DMAPP to form geranylgeranyl pyrophosphate. The protein is Geranylgeranyl pyrophosphate synthase 11, chloroplastic of Arabidopsis thaliana (Mouse-ear cress).